A 1071-amino-acid chain; its full sequence is Nonribosomal peptide synthetase flvI (1071 aa).

An adenylation region spans residues 33–417; it reads RRVLEQHDAP…GSLHFISRKD (385 aa). In terms of domain architecture, Carrier spans 552–628; it reads MPLTEIELKM…MLCQNIKTDV (77 aa). S589 bears the O-(pantetheine 4'-phosphoryl)serine mark. The condensation stretch occupies residues 689–961; it reads NYTLRLEFKL…IDDRDIEQLS (273 aa).

The protein belongs to the NRP synthetase family.

The enzyme catalyses (2S)-5,5-dimethylpiperidine-2-carboxylate + 10-hydroxy-pre-flavunoidine + ATP = flavunoidine + AMP + diphosphate + H(+). It participates in secondary metabolite biosynthesis; terpenoid biosynthesis. Its function is as follows. Nonribosomal peptide synthetase; part of the gene cluster that mediates the biosynthesis of flavunoidine, an alkaloidal terpenoid with a tetracyclic cage-like core connected to dimethylcadaverine via a C-N bond and acylated with 5,5-dimethyl-L-pipecolate. The tetracyclic core is synthesized by the terpene cyclase flvE and the cytochrome P450 monooxygenase flvD. The terpene cyclase flvE catalyzes the cyclization of farnesyl pyrophosphate (FPP) to form (1R,4R,5S)-(+)-acoradiene and the cytochrome P450 monooxygenase flvD is then responsible for oxidative conversion of (1R,4R,5S)-(+)-acoradiene into the tetracyclic cage present in the final product flavunoidine. In parallel, the N-methyltransferase flvH dimethylates L-lysine to give N,N-dimethyl-L-Lysin which is decarboxylated by flvG to afford dimethylcadaverine. The terpene cyclase-like protein flvF is the enzyme that attaches the dimethylcadaverine precusor at the C-7 of the tetracyclic cage to yield pre-flavunoidine. The cytochrome monooxygenase flvC hydroxylates the C-10 position of pre-flavunoidine whereas the NRPS flvI acylates the terpenoid core at the hydroxylated C-10 with dimethylpipecolate to yield final flavunoidine. The bifunctional enzyme flvA and the dehydrogenase flvB are responsible for the synthesis of the dimethylpipecolate precursor. The PLP-dependent lyase domain of flvA might use L-O-acetyl-homoserine and alpha-keto-isovalerate to form an intermediary ketone that can cyclize intramolecularly to yield an imine. The imine can be reduced by flvB to yield the 6-carboxylated pipecolate. The C-terminal alpha-KG-dependent oxygenase domain of flvA is then proposed to catalyze the decarboxylation to yield dimethylpipecolate. In Aspergillus flavus (strain ATCC 200026 / FGSC A1120 / IAM 13836 / NRRL 3357 / JCM 12722 / SRRC 167), this protein is Nonribosomal peptide synthetase flvI.